The chain runs to 286 residues: Putative thiosulfate sulfurtransferase (286 aa).

One can recognise a Rhodanese 1 domain in the interval 27–134; the sequence is DDPAYRLVEV…WVDNDYPTTD (108 aa). Residues lysine 162 and lysine 166 each participate in a glycyl lysine isopeptide (Lys-Gly) (interchain with G-Cter in SAMP2) cross-link. A Rhodanese 2 domain is found at 164–283; sequence VDKGLPLVDV…WGNLVGAPVE (120 aa). Cysteine 242 (cysteine persulfide intermediate) is an active-site residue. Arginine 247 lines the substrate pocket.

It catalyses the reaction thiosulfate + hydrogen cyanide = thiocyanate + sulfite + 2 H(+). Its function is as follows. May be a sulfotransferase involved in the formation of thiosulfate. This is Putative thiosulfate sulfurtransferase (tssA) from Haloferax volcanii (strain ATCC 29605 / DSM 3757 / JCM 8879 / NBRC 14742 / NCIMB 2012 / VKM B-1768 / DS2) (Halobacterium volcanii).